A 432-amino-acid chain; its full sequence is Adenylosuccinate synthetase (432 aa).

Residues 13-19 (GDEGKGK) and 41-43 (GHT) each bind GTP. Catalysis depends on Asp14, which acts as the Proton acceptor. 2 residues coordinate Mg(2+): Asp14 and Gly41. Residues 14–17 (DEGK), 39–42 (NAGH), Thr130, Arg144, Gln225, Thr240, and Arg304 contribute to the IMP site. The active-site Proton donor is the His42. Position 300–306 (300–306 (STTGRPR)) interacts with substrate. Residues Arg306, 332–334 (KLD), and 416–418 (STG) each bind GTP.

This sequence belongs to the adenylosuccinate synthetase family. As to quaternary structure, homodimer. Mg(2+) is required as a cofactor.

It localises to the cytoplasm. It catalyses the reaction IMP + L-aspartate + GTP = N(6)-(1,2-dicarboxyethyl)-AMP + GDP + phosphate + 2 H(+). It functions in the pathway purine metabolism; AMP biosynthesis via de novo pathway; AMP from IMP: step 1/2. Plays an important role in the de novo pathway of purine nucleotide biosynthesis. Catalyzes the first committed step in the biosynthesis of AMP from IMP. This chain is Adenylosuccinate synthetase, found in Nitrosomonas europaea (strain ATCC 19718 / CIP 103999 / KCTC 2705 / NBRC 14298).